A 94-amino-acid polypeptide reads, in one-letter code: MSCYTAILKSVGGLALFQVANGAIDLCRHFFMYFCEQKLRPNSFWFVVVRAIASMIMYLVLGIALLYISEQDNKKNTNNDKRNESSINSNSSPK.

A signal peptide spans 1-22; that stretch reads MSCYTAILKSVGGLALFQVANG. Over 23–45 the chain is Intravirion; it reads AIDLCRHFFMYFCEQKLRPNSFW. A helical membrane pass occupies residues 46–66; the sequence is FVVVRAIASMIMYLVLGIALL. Residues 67–83 are Virion surface-facing; sequence YISEQDNKKNTNNDKRN. The segment covering 74–84 has biased composition (basic and acidic residues); it reads KKNTNNDKRNE. The interval 74-94 is disordered; sequence KKNTNNDKRNESSINSNSSPK. An N-linked (GlcNAc...) asparagine; by host glycan is attached at asparagine 83. A compositionally biased stretch (polar residues) spans 85–94; that stretch reads SSINSNSSPK.

It belongs to the oerthopoxvirus OPG135 family.

The protein localises to the virion membrane. It is found in the host cytoplasm. In terms of biological role, envelope protein. Required for an early step in virion morphogenesis. The sequence is that of Virion membrane protein OPG135 (OPG135) from Homo sapiens (Human).